The following is a 257-amino-acid chain: MLVPLILTLLAGAATFIGAFLGVLGQKPSNRVLAFSLGFAAGIMLLISLMEMLPAALDTEGMSPVLGYGMFIIGLLGYFGLDRLLPHAHPQDLMQKRQQPLPGSIKRTAILLTLGISLHNFPEGIATFVTASSNLELGFGIALAVALHNIPEGLAVAGPVYAATGSKRTAIFWAGISGMAEILGGVLAWLILGSLVSPIVMAAIMAAVAGIMVALSVDELMPLAKEIDPNNNPSYGVLCGMSIMGLSLVILQTIGIG.

Transmembrane regions (helical) follow at residues 5 to 25 (LILT…GVLG), 32 to 52 (VLAF…LMEM), 61 to 81 (GMSP…YFGL), 109 to 129 (AILL…ATFV), 137 to 157 (LGFG…LAVA), 171 to 191 (IFWA…AWLI), 195 to 215 (LVSP…MVAL), and 236 to 256 (GVLC…TIGI). Fe(2+) is bound by residues N120 and E123. Positions 123 and 148 each coordinate Zn(2+). Fe(2+) contacts are provided by N149, E152, and E181. Residue E152 participates in Zn(2+) binding.

It belongs to the ZIP transporter (TC 2.A.5) family. ZupT subfamily.

It is found in the cell inner membrane. The catalysed reaction is Zn(2+)(in) = Zn(2+)(out). Functionally, mediates zinc uptake. May also transport other divalent cations. This is Zinc transporter ZupT from Salmonella heidelberg (strain SL476).